Consider the following 223-residue polypeptide: Phosphoribosylformylglycinamidine synthase subunit PurQ (223 aa).

One can recognise a Glutamine amidotransferase type-1 domain in the interval 2–223; the sequence is KTAIIQLPGL…FQSALELAKG (222 aa). Catalysis depends on cysteine 86, which acts as the Nucleophile. Catalysis depends on residues histidine 196 and glutamate 198.

As to quaternary structure, part of the FGAM synthase complex composed of 1 PurL, 1 PurQ and 2 PurS subunits.

The protein localises to the cytoplasm. The catalysed reaction is N(2)-formyl-N(1)-(5-phospho-beta-D-ribosyl)glycinamide + L-glutamine + ATP + H2O = 2-formamido-N(1)-(5-O-phospho-beta-D-ribosyl)acetamidine + L-glutamate + ADP + phosphate + H(+). It carries out the reaction L-glutamine + H2O = L-glutamate + NH4(+). It functions in the pathway purine metabolism; IMP biosynthesis via de novo pathway; 5-amino-1-(5-phospho-D-ribosyl)imidazole from N(2)-formyl-N(1)-(5-phospho-D-ribosyl)glycinamide: step 1/2. Part of the phosphoribosylformylglycinamidine synthase complex involved in the purines biosynthetic pathway. Catalyzes the ATP-dependent conversion of formylglycinamide ribonucleotide (FGAR) and glutamine to yield formylglycinamidine ribonucleotide (FGAM) and glutamate. The FGAM synthase complex is composed of three subunits. PurQ produces an ammonia molecule by converting glutamine to glutamate. PurL transfers the ammonia molecule to FGAR to form FGAM in an ATP-dependent manner. PurS interacts with PurQ and PurL and is thought to assist in the transfer of the ammonia molecule from PurQ to PurL. In Bartonella henselae (strain ATCC 49882 / DSM 28221 / CCUG 30454 / Houston 1) (Rochalimaea henselae), this protein is Phosphoribosylformylglycinamidine synthase subunit PurQ.